A 235-amino-acid polypeptide reads, in one-letter code: MALRTLASKKVLSFPFGGAGRPLAAAASARGVTTVTLPDLSYDFGALEPAISGEIMRLHHQKHHATYVANYNKALEQLETAVSKGDASAVVQLQAAIKFNGGGHVNHSIFWKNLKPISEGGGEPPHGKLGWAIDEDFGSFEALVKKMNAEGAALQGSGWVWLALDKEAKKVSVETTANQDPLVTKGASLVPLLGIDVWEHAYYLQYKNVRPDYLNNIWKVMNWKYAGEVYENVLA.

The transit peptide at 1–31 directs the protein to the mitochondrion; the sequence is MALRTLASKKVLSFPFGGAGRPLAAAASARG. Mn(2+) contacts are provided by His59, His107, Asp196, and His200.

This sequence belongs to the iron/manganese superoxide dismutase family. In terms of assembly, homotetramer. Mn(2+) serves as cofactor.

It is found in the mitochondrion matrix. The catalysed reaction is 2 superoxide + 2 H(+) = H2O2 + O2. Its function is as follows. Destroys superoxide anion radicals which are normally produced within the cells and which are toxic to biological systems. The sequence is that of Superoxide dismutase [Mn] 3.1, mitochondrial (SODA.4) from Zea mays (Maize).